The primary structure comprises 723 residues: Probable C-mannosyltransferase DPY19L4 (723 aa).

The interval 1–33 is disordered; the sequence is MAEEEGPPVELRQRKKPKSSENKESAKEEKISD. Residue Ala2 is modified to N-acetylalanine. A compositionally biased stretch (basic and acidic residues) spans 18–32; the sequence is KSSENKESAKEEKIS. The next 12 helical transmembrane spans lie at 52–72, 161–178, 184–202, 222–240, 260–280, 292–310, 316–337, 349–370, 421–441, 466–486, 489–509, and 522–542; these read IFIGCLAAVTSGMMYALYLSA, VYFYIGIVFGLQGIYVTA, WLMSGTWLAGMLTVAWFVI, LPYFACQIAALTGYLKSNL, MMMWEYSHYLLFLQAISLFLL, YEVYKIYIFSLFLGYLLQF, LVSPLLSLVAALMLAKCLQLNV, VINFYLVCTLTITLNIIMKMFV, LLPFYILVLIICFLSMLQVIF, IIYHVIHTILLGSLAMVIEGL, IWIPYVCMLAAFGVCSPELWM, and PILLALILSMAVPTIIGLSLW.

The protein belongs to the dpy-19 family. As to expression, widely expressed.

Its subcellular location is the membrane. In terms of biological role, probable C-mannosyltransferase that mediates C-mannosylation of tryptophan residues on target proteins. This chain is Probable C-mannosyltransferase DPY19L4 (DPY19L4), found in Homo sapiens (Human).